The primary structure comprises 262 residues: Ribose-5-phosphate isomerase A (262 aa).

Substrate contacts are provided by residues Thr-33–Thr-36, Asp-89–Asp-92, and Lys-102–Gly-105. Glu-111 serves as the catalytic Proton acceptor. Lys-129 contacts substrate.

It belongs to the ribose 5-phosphate isomerase family. In terms of assembly, homodimer.

The enzyme catalyses aldehydo-D-ribose 5-phosphate = D-ribulose 5-phosphate. The protein operates within carbohydrate degradation; pentose phosphate pathway; D-ribose 5-phosphate from D-ribulose 5-phosphate (non-oxidative stage): step 1/1. Catalyzes the reversible conversion of ribose-5-phosphate to ribulose 5-phosphate. The chain is Ribose-5-phosphate isomerase A from Jannaschia sp. (strain CCS1).